The sequence spans 346 residues: GTPase Obg (346 aa).

The Obg domain maps to 1–158; that stretch reads MFIDKAKIYV…RWIELELKLL (158 aa). The OBG-type G domain maps to 159 to 330; it reads ADVGIIGFPN…LINLIRETRD (172 aa). GTP is bound by residues 165–172, 190–194, 212–215, 282–285, and 311–313; these read GFPNAGKS, FTTLT, DIPG, NKID, and SLI. Mg(2+)-binding residues include Ser-172 and Thr-192.

This sequence belongs to the TRAFAC class OBG-HflX-like GTPase superfamily. OBG GTPase family. Monomer. Requires Mg(2+) as cofactor.

The protein resides in the cytoplasm. An essential GTPase which binds GTP, GDP and possibly (p)ppGpp with moderate affinity, with high nucleotide exchange rates and a fairly low GTP hydrolysis rate. Plays a role in control of the cell cycle, stress response, ribosome biogenesis and in those bacteria that undergo differentiation, in morphogenesis control. The protein is GTPase Obg of Sulfurihydrogenibium sp. (strain YO3AOP1).